Here is a 315-residue protein sequence, read N- to C-terminus: Ribosomal RNA small subunit methyltransferase H (315 aa).

S-adenosyl-L-methionine-binding positions include 35 to 37 (GGH), D55, F80, D102, and Q109.

The protein belongs to the methyltransferase superfamily. RsmH family.

The protein resides in the cytoplasm. It catalyses the reaction cytidine(1402) in 16S rRNA + S-adenosyl-L-methionine = N(4)-methylcytidine(1402) in 16S rRNA + S-adenosyl-L-homocysteine + H(+). Functionally, specifically methylates the N4 position of cytidine in position 1402 (C1402) of 16S rRNA. The chain is Ribosomal RNA small subunit methyltransferase H from Shewanella halifaxensis (strain HAW-EB4).